The primary structure comprises 223 residues: Lipoprotein-releasing system ATP-binding protein LolD (223 aa).

The ABC transporter domain maps to 1–223 (MAKVFRSGST…DEVEPQSLPA (223 aa)). 32 to 39 (GDSGSGKS) is an ATP binding site.

This sequence belongs to the ABC transporter superfamily. Lipoprotein translocase (TC 3.A.1.125) family. As to quaternary structure, the complex is composed of two ATP-binding proteins (LolD) and two transmembrane proteins (LolC and LolE).

The protein resides in the cell inner membrane. Its function is as follows. Part of the ABC transporter complex LolCDE involved in the translocation of mature outer membrane-directed lipoproteins, from the inner membrane to the periplasmic chaperone, LolA. Responsible for the formation of the LolA-lipoprotein complex in an ATP-dependent manner. In Koribacter versatilis (strain Ellin345), this protein is Lipoprotein-releasing system ATP-binding protein LolD.